The primary structure comprises 413 residues: Multifunctional CCA protein (413 aa).

ATP is bound by residues glycine 8 and arginine 11. CTP contacts are provided by glycine 8 and arginine 11. Mg(2+) is bound by residues aspartate 21 and aspartate 23. Residues arginine 91, arginine 143, and arginine 146 each coordinate ATP. The CTP site is built by arginine 91, arginine 143, and arginine 146. Positions 232–333 (TGVHVMMVID…VRLLERADAL (102 aa)) constitute an HD domain.

This sequence belongs to the tRNA nucleotidyltransferase/poly(A) polymerase family. Bacterial CCA-adding enzyme type 1 subfamily. Monomer. Can also form homodimers and oligomers. Mg(2+) is required as a cofactor. It depends on Ni(2+) as a cofactor.

It carries out the reaction a tRNA precursor + 2 CTP + ATP = a tRNA with a 3' CCA end + 3 diphosphate. The enzyme catalyses a tRNA with a 3' CCA end + 2 CTP + ATP = a tRNA with a 3' CCACCA end + 3 diphosphate. In terms of biological role, catalyzes the addition and repair of the essential 3'-terminal CCA sequence in tRNAs without using a nucleic acid template. Adds these three nucleotides in the order of C, C, and A to the tRNA nucleotide-73, using CTP and ATP as substrates and producing inorganic pyrophosphate. tRNA 3'-terminal CCA addition is required both for tRNA processing and repair. Also involved in tRNA surveillance by mediating tandem CCA addition to generate a CCACCA at the 3' terminus of unstable tRNAs. While stable tRNAs receive only 3'-terminal CCA, unstable tRNAs are marked with CCACCA and rapidly degraded. This chain is Multifunctional CCA protein, found in Burkholderia pseudomallei (strain 668).